Consider the following 412-residue polypeptide: Serine hydroxymethyltransferase (412 aa).

(6S)-5,6,7,8-tetrahydrofolate-binding positions include L117 and G121–L123. N6-(pyridoxal phosphate)lysine is present on K226. S349–F351 provides a ligand contact to (6S)-5,6,7,8-tetrahydrofolate.

It belongs to the SHMT family. In terms of assembly, homodimer. The cofactor is pyridoxal 5'-phosphate.

The protein resides in the cytoplasm. The catalysed reaction is (6R)-5,10-methylene-5,6,7,8-tetrahydrofolate + glycine + H2O = (6S)-5,6,7,8-tetrahydrofolate + L-serine. It functions in the pathway one-carbon metabolism; tetrahydrofolate interconversion. It participates in amino-acid biosynthesis; glycine biosynthesis; glycine from L-serine: step 1/1. In terms of biological role, catalyzes the reversible interconversion of serine and glycine with tetrahydrofolate (THF) serving as the one-carbon carrier. This reaction serves as the major source of one-carbon groups required for the biosynthesis of purines, thymidylate, methionine, and other important biomolecules. Also exhibits THF-independent aldolase activity toward beta-hydroxyamino acids, producing glycine and aldehydes, via a retro-aldol mechanism. The sequence is that of Serine hydroxymethyltransferase from Nitratidesulfovibrio vulgaris (strain DSM 19637 / Miyazaki F) (Desulfovibrio vulgaris).